The following is a 226-amino-acid chain: MRHRGRRSTQHTHVREGIYIKKLIKQINPACRIQVKSVQILTSLIRDTTISIMNEAFHLVQLSNKRTLSARDVQTSVRLCTVGEISRHAVSEGVKRVTNFNSAKQYPPQPPPAKTATPSSPSSIPAPPISHPPIIPHSYLKTKVKQMNYNYRISNSSMHYLSAVIEYLLSEILELSSNGAVSAKRTLIQPRDIFLAIANDIELHSMYGHVIIPGGGTKPLFNSLSF.

The tract at residues 100–130 (FNSAKQYPPQPPPAKTATPSSPSSIPAPPIS) is disordered. Over residues 114 to 123 (KTATPSSPSS) the composition is skewed to low complexity.

This sequence belongs to the histone H2B family.

This chain is Histone H2B.v1 (H2Bv1), found in Dictyostelium discoideum (Social amoeba).